A 452-amino-acid polypeptide reads, in one-letter code: Adenosylmethionine-8-amino-7-oxononanoate aminotransferase (452 aa).

116–117 is a pyridoxal 5'-phosphate binding site; sequence GS. Tyr152 lines the substrate pocket. Residue Asp257 participates in pyridoxal 5'-phosphate binding. The substrate site is built by Lys286, Gly321, and Arg414. Lys286 bears the N6-(pyridoxal phosphate)lysine mark.

Belongs to the class-III pyridoxal-phosphate-dependent aminotransferase family. BioA subfamily. Homodimer. Pyridoxal 5'-phosphate serves as cofactor.

It is found in the cytoplasm. The catalysed reaction is (8S)-8-amino-7-oxononanoate + S-adenosyl-L-methionine = S-adenosyl-4-methylsulfanyl-2-oxobutanoate + (7R,8S)-7,8-diammoniononanoate. It functions in the pathway cofactor biosynthesis; biotin biosynthesis; 7,8-diaminononanoate from 8-amino-7-oxononanoate (SAM route): step 1/1. In terms of biological role, catalyzes the transfer of the alpha-amino group from S-adenosyl-L-methionine (SAM) to 7-keto-8-aminopelargonic acid (KAPA) to form 7,8-diaminopelargonic acid (DAPA). It is the only aminotransferase known to utilize SAM as an amino donor. The sequence is that of Adenosylmethionine-8-amino-7-oxononanoate aminotransferase from Staphylococcus aureus (strain NCTC 8325 / PS 47).